A 113-amino-acid chain; its full sequence is Large ribosomal subunit protein bL19 (113 aa).

This sequence belongs to the bacterial ribosomal protein bL19 family.

Functionally, this protein is located at the 30S-50S ribosomal subunit interface and may play a role in the structure and function of the aminoacyl-tRNA binding site. The chain is Large ribosomal subunit protein bL19 from Nocardia farcinica (strain IFM 10152).